A 123-amino-acid polypeptide reads, in one-letter code: MARIAGIDLPREKRVEVGLTYIFGIGTSSAKKILKETGVNPDIRIKDLSEEEVNLLRDYINQNLKVEGDLRRDVALDIKRLKEIGSYRGIRHRRGLPVRGQKTKTNARTRKGPKKLVVSRKKK.

Residues 92-123 form a disordered region; it reads HRRGLPVRGQKTKTNARTRKGPKKLVVSRKKK.

Belongs to the universal ribosomal protein uS13 family. As to quaternary structure, part of the 30S ribosomal subunit. Forms a loose heterodimer with protein S19. Forms two bridges to the 50S subunit in the 70S ribosome.

Located at the top of the head of the 30S subunit, it contacts several helices of the 16S rRNA. In the 70S ribosome it contacts the 23S rRNA (bridge B1a) and protein L5 of the 50S subunit (bridge B1b), connecting the 2 subunits; these bridges are implicated in subunit movement. Contacts the tRNAs in the A and P-sites. The sequence is that of Small ribosomal subunit protein uS13 from Clostridium tetani (strain Massachusetts / E88).